Here is a 366-residue protein sequence, read N- to C-terminus: Beta sliding clamp (366 aa).

The segment at 1–125 (MKFTVEREHL…FPNLDDWQSE (125 aa)) is i. The segment at 126–253 (VEFTLPQATM…YRRVLPKNPD (128 aa)) is II. An III region spans residues 254–366 (KHLEAGCDLL…AAYVVMPMRL (113 aa)).

It belongs to the beta sliding clamp family. In terms of assembly, forms a ring-shaped head-to-tail homodimer around DNA which binds and tethers DNA polymerases and other proteins to the DNA. The DNA replisome complex has a single clamp-loading complex (3 tau and 1 each of delta, delta', psi and chi subunits) which binds 3 Pol III cores (1 core on the leading strand and 2 on the lagging strand) each with a beta sliding clamp dimer. Additional proteins in the replisome are other copies of gamma, psi and chi, Ssb, DNA helicase and RNA primase.

It localises to the cytoplasm. Functionally, confers DNA tethering and processivity to DNA polymerases and other proteins. Acts as a clamp, forming a ring around DNA (a reaction catalyzed by the clamp-loading complex) which diffuses in an ATP-independent manner freely and bidirectionally along dsDNA. Initially characterized for its ability to contact the catalytic subunit of DNA polymerase III (Pol III), a complex, multichain enzyme responsible for most of the replicative synthesis in bacteria; Pol III exhibits 3'-5' exonuclease proofreading activity. The beta chain is required for initiation of replication as well as for processivity of DNA replication. The sequence is that of Beta sliding clamp (dnaN) from Escherichia coli O157:H7.